The sequence spans 214 residues: Adenylate kinase (214 aa).

10-15 (GAGKGT) provides a ligand contact to ATP. The NMP stretch occupies residues 30–59 (STGDMFRDHKARGTEIGKQVQAIMDGGGLV). AMP contacts are provided by residues T31, R36, 57–59 (GLV), 85–88 (GYPR), and Q92. The interval 126-163 (GRRSCPRCGAVYHVSQNPPRRAGYCDRDDAELVQREDD) is LID. An ATP-binding site is contributed by R127. Zn(2+) contacts are provided by C130 and C133. Residue 136–137 (VY) coordinates ATP. Positions 150 and 153 each coordinate Zn(2+). AMP is bound by residues R160 and R171. An ATP-binding site is contributed by G199.

Belongs to the adenylate kinase family. As to quaternary structure, monomer.

Its subcellular location is the cytoplasm. The enzyme catalyses AMP + ATP = 2 ADP. It participates in purine metabolism; AMP biosynthesis via salvage pathway; AMP from ADP: step 1/1. Catalyzes the reversible transfer of the terminal phosphate group between ATP and AMP. Plays an important role in cellular energy homeostasis and in adenine nucleotide metabolism. The protein is Adenylate kinase of Anaeromyxobacter dehalogenans (strain 2CP-C).